A 612-amino-acid polypeptide reads, in one-letter code: Probable cytosolic Fe-S cluster assembly factor SJAG_02895 (612 aa).

13-20 contributes to the ATP binding site; sequence GKGGVGKS. Positions 200 and 203 each coordinate [4Fe-4S] cluster. 7 WD repeats span residues 287–326, 330–370, 375–414, 420–459, 464–503, 528–566, and 574–612; these read GHRG…LIHV, YHTR…WECV, GHEN…EFDC, EHTQ…WVQT, SHTS…EDAA, TFTE…STWH, and AHDV…DQTA.

It in the N-terminal section; belongs to the Mrp/NBP35 ATP-binding proteins family. NUBP2/CFD1 subfamily. The protein in the C-terminal section; belongs to the WD repeat CIA1 family. Heterotetramer of 2 nbp35 and 2 SJAG_02895 chains. [4Fe-4S] cluster is required as a cofactor.

The protein localises to the cytoplasm. It localises to the nucleus. In terms of biological role, fusion protein of two essential components of the cytosolic iron-sulfur (Fe/S) protein assembly (CIA) machinery. Required for maturation of extramitochondrial Fe-S proteins. May form a heterotetramer with nubp35, functioning as a Fe-S scaffold complex, mediating the de novo assembly of an Fe-S cluster and its transfer to target apoproteins. This Schizosaccharomyces japonicus (strain yFS275 / FY16936) (Fission yeast) protein is Probable cytosolic Fe-S cluster assembly factor SJAG_02895.